An 81-amino-acid polypeptide reads, in one-letter code: ATP synthase subunit c, chloroplastic (81 aa).

2 consecutive transmembrane segments (helical) span residues 3 to 23 (PIIC…GAIG) and 57 to 77 (LAFM…IIFA).

It belongs to the ATPase C chain family. In terms of assembly, F-type ATPases have 2 components, F(1) - the catalytic core - and F(0) - the membrane proton channel. F(1) has five subunits: alpha(3), beta(3), gamma(1), delta(1), epsilon(1). F(0) has four main subunits: a(1), b(1), b'(1) and c(10-14). The alpha and beta chains form an alternating ring which encloses part of the gamma chain. F(1) is attached to F(0) by a central stalk formed by the gamma and epsilon chains, while a peripheral stalk is formed by the delta, b and b' chains.

Its subcellular location is the plastid. It is found in the chloroplast thylakoid membrane. F(1)F(0) ATP synthase produces ATP from ADP in the presence of a proton or sodium gradient. F-type ATPases consist of two structural domains, F(1) containing the extramembraneous catalytic core and F(0) containing the membrane proton channel, linked together by a central stalk and a peripheral stalk. During catalysis, ATP synthesis in the catalytic domain of F(1) is coupled via a rotary mechanism of the central stalk subunits to proton translocation. In terms of biological role, key component of the F(0) channel; it plays a direct role in translocation across the membrane. A homomeric c-ring of between 10-14 subunits forms the central stalk rotor element with the F(1) delta and epsilon subunits. The sequence is that of ATP synthase subunit c, chloroplastic from Euglena gracilis.